The sequence spans 91 residues: uncharacterized protein (91 aa).

Residues 1-18 (MKVNLILFSLFLLVSIMA) form the signal peptide. A lipid anchor (N-palmitoyl cysteine) is attached at cysteine 19. The S-diacylglycerol cysteine moiety is linked to residue cysteine 19.

It localises to the cell membrane. This is an uncharacterized protein from Escherichia coli (strain K12).